Consider the following 184-residue polypeptide: dCTP deaminase (184 aa).

Residues 107–112, 131–133, glutamine 152, tyrosine 166, and glutamine 176 contribute to the dCTP site; these read KSTYAR and TLE. Residue glutamate 133 is the Proton donor/acceptor of the active site.

Belongs to the dCTP deaminase family. Homotrimer.

It catalyses the reaction dCTP + H2O + H(+) = dUTP + NH4(+). The protein operates within pyrimidine metabolism; dUMP biosynthesis; dUMP from dCTP (dUTP route): step 1/2. Functionally, catalyzes the deamination of dCTP to dUTP. The sequence is that of dCTP deaminase from Rhizorhabdus wittichii (strain DSM 6014 / CCUG 31198 / JCM 15750 / NBRC 105917 / EY 4224 / RW1) (Sphingomonas wittichii).